Here is a 3011-residue protein sequence, read N- to C-terminus: Genome polyprotein (3011 aa).

The residue at position 2 (Ser-2) is an N-acetylserine; by host. Positions 2-23 (STNPKPQRKTKRNTNRRPQNVK) are interaction with STAT1. The interaction with EIF2AK2/PKR stretch occupies residues 2–58 (STNPKPQRKTKRNTNRRPQNVKFPGGGQIVGGVCLLPRRGPRVGVRATRKTSERSQP). The interaction with DDX3X stretch occupies residues 2–59 (STNPKPQRKTKRNTNRRPQNVKFPGGGQIVGGVCLLPRRGPRVGVRATRKTSERSQPR). Residues 2–75 (STNPKPQRKT…PKARRPEGRS (74 aa)) form a disordered region. Residues 2–168 (STNPKPQRKT…EDGVNYATGN (167 aa)) lie on the Cytoplasmic side of the membrane. Short sequence motifs (nuclear localization signal) lie at residues 5–13 (PKPQRKTKR) and 38–43 (PRRGPR). Residues 7 to 16 (PQRKTKRNTN) show a composition bias toward basic residues. Ser-53 bears the Phosphoserine; by host mark. 2 short sequence motifs (nuclear localization signal) span residues 58-64 (PRGRRQP) and 66-71 (PKARRP). Residues 58 to 68 (PRGRRQPIPKA) show a composition bias toward basic residues. Ser-99 is subject to Phosphoserine; by host. The important for endoplasmic reticulum and mitochondrial localization stretch occupies residues 112–152 (PRRRSRNLGKVIDTLTCGFADLMGYIPLVGAPLGGAARALA). Ser-116 is subject to Phosphoserine; by host PKA. The interval 122-173 (VIDTLTCGFADLMGYIPLVGAPLGGAARALAHGVRVLEDGVNYATGNLPGCS) is interaction with APOA2. Residues 164-167 (YATG) are important for lipid droplets localization. A helical transmembrane segment spans residues 169–189 (LPGCSFSIFLLALLSCLTVPA). The propeptide at 178–191 (LLALLSCLTVPASA) is ER anchor for the core protein, removed in mature form by host signal peptidase. The Lumenal segment spans residues 190 to 358 (SAVEVRNSSG…AGAHWGVLAG (169 aa)). N-linked (GlcNAc...) asparagine; by host glycosylation is found at Asn-196, Asn-209, and Asn-234. The interval 265 to 296 (IVGAAAFCSAMYVGDLCGSIFLVGQLFTLSPR) is important for fusion. The N-linked (GlcNAc...) asparagine; by host glycan is linked to Asn-305. Residues 359–379 (PAYYSMVGNWAKVLVVLLLFA) form a helical membrane-spanning segment. Residues 380–725 (GVDATTQVTG…WEYVVLLFLL (346 aa)) lie on the Lumenal side of the membrane. Residues 385–411 (TQVTGGTAGRNAYRLASLFSTGPSQNI) form an HVR1 region. N-linked (GlcNAc...) (high mannose) asparagine; by host glycosylation is found at Asn-417, Asn-423, Asn-430, and Asn-448. Cystine bridges form between Cys-429/Cys-552, Cys-486/Cys-494, and Cys-503/Cys-508. The HVR2 stretch occupies residues 474–479 (YGGKAS). Residues 480–493 (NDQRPYCWHYAPRP) are CD81-binding 1. Residue Asn-532 is glycosylated (N-linked (GlcNAc...) (high mannose) asparagine; by host). The N-linked (GlcNAc...) asparagine; by host glycan is linked to Asn-540. Residues 544 to 551 (PPIGNWFG) are CD81-binding 2. A glycan (N-linked (GlcNAc...) (high mannose) asparagine; by host) is linked at Asn-556. Disulfide bonds link Cys-564–Cys-569, Cys-581–Cys-585, Cys-597–Cys-620, and Cys-607–Cys-644. N-linked (GlcNAc...) (high mannose) asparagine; by host glycans are attached at residues Asn-623 and Asn-645. Residues Cys-652 and Cys-677 are joined by a disulfide bond. The PKR/eIF2-alpha phosphorylation homology domain (PePHD) stretch occupies residues 660–671 (AELSPLLLSTTQ). Residues 726-746 (LADARICACLWMMLLISQVEA) form a helical membrane-spanning segment. Residues 747-757 (ALENLIVLNAA) lie on the Lumenal side of the membrane. Residues 758–778 (SLAGTHGIVPFFIFFCAAWYL) traverse the membrane as a helical segment. The Cytoplasmic portion of the chain corresponds to 779–781 (KGK). Residues 782–803 (WAPGLVYSVYGMWPLLLLLLAL) form a helical membrane-spanning segment. The Lumenal portion of the chain corresponds to 804–813 (PQRAYALDQE). The helical transmembrane segment at 814–834 (LAASCGAVVFISLAVLTLSPY) threads the bilayer. The Cytoplasmic portion of the chain corresponds to 835–838 (YKQY). Residues 839-859 (MARGIWWLQYMLTRAEALLHV) traverse the membrane as a helical segment. Residues 860-881 (WVPSLNARGGRDGAILLMCVLH) lie on the Lumenal side of the membrane. Residues 882 to 902 (PHLLFDITKIMLAILGPLWIL) form a helical membrane-spanning segment. Residues 903–1026 (QASLLRVPYF…ALTDKGWRLL (124 aa)) enclose the Peptidase C18 domain. Residues 903–1657 (QASLLRVPYF…CMSADLEVVT (755 aa)) lie on the Cytoplasmic side of the membrane. The protease NS2-3 stretch occupies residues 904–1206 (ASLLRVPYFV…PVESLETTMR (303 aa)). The S-palmitoyl cysteine; by host moiety is linked to residue Cys-922. Residues 929 to 949 (AGGHYVQMALLKLGALTGTYI) form an interaction with host SCPS1 region. Active-site for protease NS2 activity; shared with dimeric partner residues include His-952, Glu-972, and Cys-993. The 182-residue stretch at 1027–1208 (APITAYAQQT…ESLETTMRSP (182 aa)) folds into the Peptidase S29 domain. Residues His-1083 and Asp-1107 each act as charge relay system; for serine protease NS3 activity in the active site. Residues Cys-1123 and Cys-1125 each coordinate Zn(2+). Residue Ser-1165 is the Charge relay system; for serine protease NS3 activity of the active site. 2 residues coordinate Zn(2+): Cys-1171 and His-1175. In terms of domain architecture, Helicase ATP-binding spans 1217–1369 (PTVPQSYQVA…SNIEEVALSA (153 aa)). Residue 1230–1237 (APTGSGKS) participates in ATP binding. Ser-1237 and Glu-1317 together coordinate Mg(2+). Positions 1316–1319 (DECH) match the DECH box motif. The segment at 1486–1497 (QRRGRTGRGKHG) is RNA-binding. A helical transmembrane segment spans residues 1658–1678 (STWVLVGGVLAALAAYCLSTG). Residues 1679-1690 (SVVIVGRIILGG) are NS3-binding. Residues 1679–1805 (SVVIVGRIIL…AVTSPLTTQQ (127 aa)) lie on the Cytoplasmic side of the membrane. Residues 1806–1824 (TLFFNILGGWVAAQLASPA) form a helical membrane-spanning segment. The Lumenal portion of the chain corresponds to 1825 to 1828 (AATA). The chain crosses the membrane as a helical span at residues 1829–1849 (FVGAGITGAVVGSVGLGKVLV). A topological domain (cytoplasmic) is located at residue Asp-1850. A helical transmembrane segment spans residues 1851-1871 (IIAGYGAGVAGALVAFKIMSG). The Lumenal segment spans residues 1872–1881 (ETPTTEDLVN). A helical transmembrane segment spans residues 1882-1902 (LLPAILSPGALVVGVVCAAIL). The Cytoplasmic portion of the chain corresponds to 1903 to 1972 (RRHVGPGEGA…WISSDCIAPC (70 aa)). S-palmitoyl cysteine; by host attachment occurs at residues Cys-1968 and Cys-1972. The stretch at 1973–2002 (ASSWLKDVWDWICEVLSDFKNWLKAKLVPQ) is an intramembrane region. Residues 2003–2990 (LPGIPFVSCQ…YHSVSHARPR (988 aa)) lie on the Cytoplasmic side of the membrane. Zn(2+)-binding residues include Cys-2011, Cys-2029, Cys-2031, and Cys-2052. Positions 2120-2208 (EFFTEVDGVR…ASSSASQLSA (89 aa)) are FKBP8-binding. Positions 2120–2332 (EFFTEVDGVR…PVPPPRRKRT (213 aa)) are transcriptional activation. Positions 2135–2139 (PPCKP) are interaction with non-structural protein 4A. The interval 2187 to 2219 (ARRLKRGSPPSLASSSASQLSAPSLKATCTTHH) is disordered. The interval 2189-2441 (RLKRGSPPSL…TPCASEEAKL (253 aa)) is interaction with host SKP2. Ser-2194 carries the phosphoserine; by host; in p56 modification. Positions 2194-2211 (SPPSLASSSASQLSAPSL) are enriched in low complexity. Residues Ser-2197, Ser-2201, Ser-2204, Ser-2207, and Ser-2210 each carry the phosphoserine; by host; in p58 modification. The interval 2210-2249 (SLKATCTTHHDSPDADLIEANLLWRQEMGGNITRVESENK) is ISDR. The segment at 2210-2275 (SLKATCTTHH…REISIPAEIL (66 aa)) is interaction with EIF2AK2/PKR. Residues 2249-2306 (KIVVLDSFDPLVAEEDDREISIPAEILRKFKQFPPAMPIWARPDYNPPLVEPWKRPDY) are NS4B-binding. The SH3-binding signature appears at 2322-2325 (TPVP). Residues 2326–2334 (PPRRKRTVV) carry the Nuclear localization signal motif. Lys-2350 participates in a covalent cross-link: Glycyl lysine isopeptide (Lys-Gly) (interchain with G-Cter in ubiquitin). Low complexity predominate over residues 2352 to 2369 (FGSSTTSGVTSGEATESS). The disordered stretch occupies residues 2352–2409 (FGSSTTSGVTSGEATESSPAPSCGGELDSEAESYSSMPPLEGEPGDPDLSDGSWSTVS). Positions 2354–2377 (SSTTSGVTSGEATESSPAPSCGGE) are V3. A phosphoserine; by host mark is found at Ser-2449 and Ser-2462. Residues 2634–2752 (PMGFSYDTRC…ICESAGVQED (119 aa)) form the RdRp catalytic domain. Mg(2+) is bound by residues Asp-2640, Asp-2738, and Asp-2739. Residues 2991–3011 (LFLWCLLLLSVGVGIYLLPNR) form a helical membrane-spanning segment.

The protein belongs to the hepacivirus polyprotein family. In terms of assembly, homooligomer. Interacts with E1 (via C-terminus). Interacts with the non-structural protein 5A. Interacts (via N-terminus) with host STAT1 (via SH2 domain); this interaction results in decreased STAT1 phosphorylation and ubiquitin-mediated proteasome-dependent STAT1 degradation, leading to decreased IFN-stimulated gene transcription. Interacts with host STAT3; this interaction constitutively activates STAT3. Interacts with host LTBR receptor. Interacts with host TNFRSF1A receptor and possibly induces apoptosis. Interacts with host HNRPK. Interacts with host YWHAE. Interacts with host UBE3A/E6AP. Interacts with host DDX3X. Interacts with host APOA2. Interacts with host RXRA protein. Interacts with host SP110 isoform 3/Sp110b; this interaction sequesters the transcriptional corepressor SP110 away from the nucleus. Interacts with host CREB3 nuclear transcription protein; this interaction triggers cell transformation. Interacts with host ACY3. Interacts with host C1QR1. Interacts with host RBM24; this interaction, which enhances the interaction of the mature core protein with 5'-UTR, may inhibit viral translation and favor replication. Interacts with host EIF2AK2/PKR; this interaction induces the autophosphorylation of EIF2AK2. Part of the viral assembly initiation complex composed of NS2, E1, E2, NS3, NS4A, NS5A and the mature core protein. As to quaternary structure, forms a heterodimer with envelope glycoprotein E2. Interacts with mature core protein. Interacts with protease NS2. The heterodimer E1/E2 interacts with host CLDN1; this interaction plays a role in viral entry into host cell. Interacts with host SPSB2 (via C-terminus). Part of the viral assembly initiation complex composed of NS2, E1, E2, NS3, NS4A, NS5A and the mature core protein. Interacts with host NEURL3; this interaction prevents E1 binding to glycoprotein E2. Forms a heterodimer with envelope glycoprotein E1. Interacts with host CD81 and SCARB1 receptors; these interactions play a role in viral entry into host cell. Interacts with host EIF2AK2/PKR; this interaction inhibits EIF2AK2 and probably allows the virus to evade the innate immune response. Interacts with host CD209/DC-SIGN and CLEC4M/DC-SIGNR. Interact with host SPCS1; this interaction is essential for viral particle assembly. Interacts with protease NS2. The heterodimer E1/E2 interacts with host CLDN1; this interaction plays a role in viral entry into host cell. Part of the viral assembly initiation complex composed of NS2, E1, E2, NS3, NS4A, NS5A and the mature core protein. Interacts with host SLC3A2/4F2hc; the interaction may facilitate viral entry into host cell. Interacts with human PLSCR1. In terms of assembly, homohexamer. Homoheptamer. Interacts with protease NS2. As to quaternary structure, homodimer. Interacts with host SPCS1; this interaction is essential for viral particle assembly. Interacts with envelope glycoprotein E1. Interacts with envelope glycoprotein E2. Interacts with viroporin p7. Interacts with serine protease/helicase NS3. Part of the replication complex composed of NS2, NS3, NS4A, NS4B, NS5A and the RNA-directed RNA polymerase embedded in an ER-derived membranous web. Part of the viral assembly initiation complex composed of NS2, E1, E2, NS3, NS4A, NS5A and the mature core protein. Interacts with protease NS2. Interacts with non-structural protein 4A; this interaction stabilizes the folding of NS3 serine protease. NS3-NS4A interaction is essential for NS3 activation and allows membrane anchorage of the latter. NS3/NS4A complex also prevents phosphorylation of host IRF3, thus preventing the establishment of dsRNA induced antiviral state. Interacts with host MAVS; this interaction leads to the cleavage and inhibition of host MAVS. Interacts with host TICAM1; this interaction leads to the cleavage and inhibition of host TICAM1. Interacts with host TANK-binding kinase/TBK1; this interaction results in the inhibition of the association between TBK1 and IRF3, which leads to the inhibition of IRF3 activation. Interacts with host RBM24. Part of the replication complex composed of NS2, NS3, NS4A, NS4B, NS5A and the RNA-directed RNA polymerase embedded in an ER-derived membranous web. Part of the viral assembly initiation complex composed of NS2, E1, E2, NS3, NS4A, NS5A and the mature core protein. In terms of assembly, interacts with NS3 serine protease; this interaction stabilizes the folding of NS3 serine protease. NS3-NS4A interaction is essential for NS3 activation and allows membrane anchorage of the latter. Interacts with non-structural protein 5A (via N-terminus). Part of the replication complex composed of NS2, NS3, NS4A, NS4B, NS5A and the RNA-directed RNA polymerase embedded in an ER-derived membranous web. Part of the viral assembly initiation complex composed of NS2, E1, E2, NS3, NS4A, NS5A and the mature core protein. As to quaternary structure, homomultimer. Interacts with non-structural protein NS5A. Interacts with host PLA2G4C; this interaction likely initiates the recruitment of replication complexes to lipid droplets. Interacts with host STING; this interaction disrupts the interaction between STING and TBK1 thereby suppressing the interferon signaling. Part of the replication complex composed of NS2, NS3, NS4A, NS4B, NS5A and the RNA-directed RNA polymerase embedded in an ER-derived membranous web. Monomer. Homodimer; dimerization is required for RNA-binding. Interacts with the mature core protein. Interacts (via N-terminus) with non-structural protein 4A. Interacts with non-structural protein 4B. Interacts (via region D2) with RNA-directed RNA polymerase. Part of the viral assembly initiation complex composed of NS2, E1, E2, NS3, NS4A, NS5A and the mature core protein. Part of the replication complex composed of NS2, NS3, NS4A, NS4B, NS5A and the RNA-directed RNA polymerase embedded in an ER-derived membranous web. Interacts with host GRB2. Interacts with host BIN1. Interacts with host PIK3R1. Interacts with host SRCAP. Interacts with host FKBP8. Interacts (via C-terminus) with host VAPB (via MSP domain). Interacts with host EIF2AK2/PKR; this interaction leads to disruption of EIF2AK2 dimerization by NS5A and probably allows the virus to evade the innate immune response. Interacts (via N-terminus) with host PACSIN2 (via N-terminus); this interaction attenuates protein kinase C alpha-mediated phosphorylation of PACSIN2 by disrupting the interaction between PACSIN2 and PRKCA. Interacts (via N-terminus) with host SRC kinase (via SH2 domain). Interacts with most Src-family kinases. Interacts with host IFI27 and SKP2; promotes the ubiquitin-mediated proteasomal degradation of NS5A. Interacts with host GPS2. Interacts with host TNFRSF21; this interaction allows the modulation by the virus of JNK, p38 MAPK, STAT3, and Akt signaling pathways in a DR6-dependent manner. Interacts (via N-terminus) with host CIDEB (via N-terminus); this interaction seems to regulate the association of HCV particles with APOE. Interacts with host CHKA/Choline Kinase-alpha; CHKA bridges host PI4KA and NS5A and potentiates NS5A-stimulated PI4KA activity, which then facilitates the targeting of the ternary complex to the ER for viral replication. Interacts with host SPSB2 (via C-terminus); this interaction targets NS5A for ubiquitination and degradation. Interacts with host RAB18; this interaction may promote the association of NS5A and other replicase components with lipid droplets. Interacts (via region D2) with host PPIA/CYPA; the interaction stimulates RNA-binding ability of NS5A and is dependent on the peptidyl-prolyl cis-trans isomerase activity of PPIA/CYPA. Interacts with host TRIM14; this interaction induces the degradation of NS5A. In terms of assembly, homooligomer. Interacts with non-structural protein 5A. Interacts with host VAPB. Interacts with host PRK2/PKN2. Interacts with host HNRNPA1 and SEPT6; these interactions facilitate viral replication. Part of the replication complex composed of NS2, NS3, NS4A, NS4B, NS5A and the RNA-directed RNA polymerase. The cofactor is Zn(2+). Requires Mg(2+) as cofactor. Post-translationally, specific enzymatic cleavages in vivo yield mature proteins. The structural proteins, core, E1, E2 and p7 are produced by proteolytic processing by host signal peptidases. The core protein precursor is synthesized as a 23 kDa, which is retained in the ER membrane through the hydrophobic signal peptide. Cleavage by the signal peptidase releases the 21 kDa mature core protein. The cleavage of the core protein precursor occurs between aminoacids 176 and 188 but the exact cleavage site is not known. Some degraded forms of the core protein appear as well during the course of infection. The other proteins (p7, NS2, NS3, NS4A, NS4B, NS5A and NS5B) are cleaved by the viral proteases. Autoprocessing between NS2 and NS3 is mediated by the NS2 cysteine protease catalytic domain and regulated by the NS3 N-terminal domain. Phosphorylated by host PKC and PKA. In terms of processing, ubiquitinated; mediated by UBE3A and leading to core protein subsequent proteasomal degradation. Post-translationally, highly N-glycosylated. Palmitoylation is required for NS2/3 autoprocessing and E2 recruitment to membranes. In terms of processing, palmitoylated. This modification may play a role in its polymerization or in protein-protein interactions. Post-translationally, phosphorylated on serines in a basal form termed p56. p58 is a hyperphosphorylated form of p56. p56 and p58 coexist in the cell in roughly equivalent amounts. Hyperphosphorylation is dependent on the presence of NS4A. Host CSNK1A1/CKI-alpha or RPS6KB1 kinases may be responsible for NS5A phosphorylation. Tyrosine phosphorylation is essential for the interaction with host SRC. In terms of processing, the N-terminus is phosphorylated by host PRK2/PKN2.

The protein localises to the host endoplasmic reticulum membrane. It localises to the host mitochondrion membrane. Its subcellular location is the virion. It is found in the host cytoplasm. The protein resides in the host nucleus. The protein localises to the host lipid droplet. It localises to the virion membrane. Its subcellular location is the host mitochondrion. It is found in the host cell membrane. The protein resides in the host perinuclear region. It catalyses the reaction Hydrolysis of four peptide bonds in the viral precursor polyprotein, commonly with Asp or Glu in the P6 position, Cys or Thr in P1 and Ser or Ala in P1'.. It carries out the reaction a ribonucleoside 5'-triphosphate + H2O = a ribonucleoside 5'-diphosphate + phosphate + H(+). The catalysed reaction is ATP + H2O = ADP + phosphate + H(+). The enzyme catalyses RNA(n) + a ribonucleoside 5'-triphosphate = RNA(n+1) + diphosphate. With respect to regulation, inhibited by the antiviral drug hexamethylene amiloride. Inhibition by amantadine appears to be genotype-dependent. Also inhibited by long-alkyl-chain iminosugar derivatives. Its activity is regulated as follows. Activity is up-regulated by PRK2/PKN2-mediated phosphorylation. Its function is as follows. Packages viral RNA to form a viral nucleocapsid, and promotes virion budding. Participates in the viral particle production as a result of its interaction with the non-structural protein 5A. Binds RNA and may function as a RNA chaperone to induce the RNA structural rearrangements taking place during virus replication. Modulates viral translation initiation by interacting with viral IRES and 40S ribosomal subunit. Affects various cell signaling pathways, host immunity and lipid metabolism. Prevents the establishment of cellular antiviral state by blocking the interferon-alpha/beta (IFN-alpha/beta) and IFN-gamma signaling pathways and by blocking the formation of phosphorylated STAT1 and promoting ubiquitin-mediated proteasome-dependent degradation of STAT1. Activates STAT3 leading to cellular transformation. Regulates the activity of cellular genes, including c-myc and c-fos. May repress the promoter of p53, and sequester CREB3 and SP110 isoform 3/Sp110b in the cytoplasm. Represses cell cycle negative regulating factor CDKN1A, thereby interrupting an important check point of normal cell cycle regulation. Targets transcription factors involved in the regulation of inflammatory responses and in the immune response: suppresses TNF-induced NF-kappa-B activation, and activates AP-1. Binds to dendritic cells (DCs) via C1QR1, resulting in down-regulation of T-lymphocytes proliferation. Alters lipid metabolism by interacting with hepatocellular proteins involved in lipid accumulation and storage. Induces up-regulation of FAS promoter activity, and thereby contributes to the increased triglyceride accumulation in hepatocytes (steatosis). Forms a heterodimer with envelope glycoprotein E2, which mediates virus attachment to the host cell, virion internalization through clathrin-dependent endocytosis and fusion with host membrane. Fusion with the host cell is most likely mediated by both E1 and E2, through conformational rearrangements of the heterodimer required for fusion rather than a classical class II fusion mechanism. E1/E2 heterodimer binds host apolipoproteins such as APOB and ApoE thereby forming a lipo-viro-particle (LVP). APOE associated to the LVP allows the initial virus attachment to cell surface receptors such as the heparan sulfate proteoglycans (HSPGs), syndecan-1 (SDC1), syndecan-1 (SDC2), the low-density lipoprotein receptor (LDLR) and scavenger receptor class B type I (SCARB1). The cholesterol transfer activity of SCARB1 allows E2 exposure and binding of E2 to SCARB1 and the tetraspanin CD81. E1/E2 heterodimer binding on CD81 activates the epithelial growth factor receptor (EGFR) signaling pathway. Diffusion of the complex E1-E2-EGFR-SCARB1-CD81 to the cell lateral membrane allows further interaction with Claudin 1 (CLDN1) and occludin (OCLN) to finally trigger HCV entry. In terms of biological role, forms a heterodimer with envelope glycoprotein E1, which mediates virus attachment to the host cell, virion internalization through clathrin-dependent endocytosis and fusion with host membrane. Fusion with the host cell is most likely mediated by both E1 and E2, through conformational rearrangements of the heterodimer required for fusion rather than a classical class II fusion mechanism. The interaction between envelope glycoprotein E2 and host apolipoprotein E/APOE allows the proper assembly, maturation and infectivity of the viral particles. This interaction is probably promoted via the up-regulation of cellular autophagy by the virus. E1/E2 heterodimer binds host apolipoproteins such as APOB and APOE thereby forming a lipo-viro-particle (LVP). APOE associated to the LVP allows the initial virus attachment to cell surface receptors such as the heparan sulfate proteoglycans (HSPGs), syndecan-1 (SDC1), syndecan-1 (SDC2), the low-density lipoprotein receptor (LDLR) and scavenger receptor class B type I (SCARB1). The cholesterol transfer activity of SCARB1 allows E2 exposure and binding of E2 to SCARB1 and the tetraspanin CD81. E1/E2 heterodimer binding on CD81 activates the epithelial growth factor receptor (EGFR) signaling pathway. Diffusion of the complex E1-E2-EGFR-SCARB1-CD81 to the cell lateral membrane allows further interaction with Claudin 1 (CLDN1) and occludin (OCLN) to finally trigger HCV entry. Inhibits host EIF2AK2/PKR activation, preventing the establishment of an antiviral state. Viral ligand for CD209/DC-SIGN and CLEC4M/DC-SIGNR, which are respectively found on dendritic cells (DCs), and on liver sinusoidal endothelial cells and macrophage-like cells of lymph node sinuses. These interactions allow the capture of circulating HCV particles by these cells and subsequent facilitated transmission to permissive cells such as hepatocytes and lymphocyte subpopulations. The interaction between E2 and host amino acid transporter complex formed by SLC3A2 and SLC7A5/LAT1 may facilitate viral entry into host cell. Functionally, ion channel protein that acts as a viroporin and plays an essential role in the assembly, envelopment and secretion of viral particles. Regulates the host cell secretory pathway, which induces the intracellular retention of viral glycoproteins and favors assembly of viral particles. Creates a pore in acidic organelles and releases Ca(2+) and H(+) in the cytoplasm of infected cells, leading to a productive viral infection. High levels of cytoplasmic Ca(2+) may trigger membrane trafficking and transport of viral ER-associated proteins to viroplasms, sites of viral genome replication. This ionic imbalance induces the assembly of the inflammasome complex, which triggers the maturation of pro-IL-1beta into IL-1beta through the action of caspase-1. Targets also host mitochondria and induces mitochondrial depolarization. In addition of its role as a viroporin, acts as a lipid raft adhesion factor. Its function is as follows. Cysteine protease required for the proteolytic auto-cleavage between the non-structural proteins NS2 and NS3. The N-terminus of NS3 is required for the function of NS2 protease (active region NS2-3). Promotes the initiation of viral particle assembly by mediating the interaction between structural and non-structural proteins. Displays three enzymatic activities: serine protease with a chymotrypsin-like fold, NTPase and RNA helicase. NS3 serine protease, in association with NS4A, is responsible for the cleavages of NS3-NS4A, NS4A-NS4B, NS4B-NS5A and NS5A-NS5B. The NS3/NS4A complex prevents phosphorylation of host IRF3, thus preventing the establishment of dsRNA induced antiviral state. The NS3/NS4A complex induces host amino acid transporter component SLC3A2, thus contributing to HCV propagation. NS3 RNA helicase binds to RNA and unwinds both dsDNA and dsRNA in the 3' to 5' direction, and likely resolves RNA complicated stable secondary structures in the template strand. Binds a single ATP and catalyzes the unzipping of a single base pair of dsRNA. Inhibits host antiviral proteins TBK1 and IRF3 thereby preventing the establishment of an antiviral state. Cleaves host MAVS/CARDIF thereby preventing the establishment of an antiviral state. Cleaves host TICAM1/TRIF, thereby disrupting TLR3 signaling and preventing the establishment of an antiviral state. In terms of biological role, induces a specific membrane alteration that serves as a scaffold for the virus replication complex. This membrane alteration gives rise to the so-called ER-derived membranous web that contains the replication complex. NS4B self-interaction contributes to its function in membranous web formation. Promotes host TRIF protein degradation in a CASP8-dependent manner thereby inhibiting host TLR3-mediated interferon signaling. Disrupts the interaction between STING and TBK1 contributing to the inhibition of interferon signaling. Functionally, phosphorylated protein that is indispensable for viral replication and assembly. Both hypo- and hyperphosphorylated states are required for the viral life cycle. The hyperphosphorylated form of NS5A is an inhibitor of viral replication. Involved in RNA-binding and especially in binding to the viral genome. Zinc is essential for RNA-binding. Participates in the viral particle production as a result of its interaction with the mature viral core protein. Its interaction with host VAPB may target the viral replication complex to vesicles. Down-regulates viral IRES translation initiation. Mediates interferon resistance, presumably by interacting with and inhibiting host EIF2AK2/PKR. Prevents BIN1-induced apoptosis. Acts as a transcriptional activator of some host genes important for viral replication when localized in the nucleus. Via the interaction with host PACSIN2, modulates lipid droplet formation in order to promote virion assembly. Modulates TNFRSF21/DR6 signaling pathway for viral propagation. Its function is as follows. RNA-dependent RNA polymerase that performs primer-template recognition and RNA synthesis during viral replication. Initiates RNA transcription/replication at a flavin adenine dinucleotide (FAD), resulting in a 5'- FAD cap on viral RNAs. In this way, recognition of viral 5' RNA by host pattern recognition receptors can be bypassed, thereby evading activation of antiviral pathways. In Hepatitis C virus genotype 1c (isolate India) (HCV), this protein is Genome polyprotein.